A 326-amino-acid polypeptide reads, in one-letter code: mRNA decay activator protein ZFP36 (326 aa).

A necessary for nuclear export region spans residues 1 to 15 (MDLTAIYESLLSLSP). The tract at residues 1–100 (MDLTAIYESL…PTSPTATSTT (100 aa)) is necessary and sufficient for the association with mRNA decay enzymes and mRNA decay activation. Necessary for localization of ARE-containing mRNAs to processing bodies (PBs) stretches follow at residues 1 to 174 (MDLT…DLAA) and 100 to 326 (TPSR…SVSE). The interval 13–66 (LSPDVPVPSDHGGTESSPGWGSSGPWSLSPSDSSPSGVTSRLPGRSTSLVEGRS) is disordered. Over residues 28-49 (SSPGWGSSGPWSLSPSDSSPSG) the composition is skewed to low complexity. At Ser-60 the chain carries Phosphoserine; by MAPKAPK2. At Ser-66 the chain carries Phosphoserine. A P-P-P-P-G repeat occupies 71-75 (PPPPG). Residues 78-102 (PLAPRLGPELSPSPTSPTATSTTPS) are disordered. Phosphoserine is present on residues Ser-88 and Ser-90. Thr-92 is modified (phosphothreonine). Ser-93 is subject to Phosphoserine. The segment at 95–168 (TATSTTPSRY…GSRCHFIHNP (74 aa)) is necessary for nuclear localization. Residues 97-173 (TSTTPSRYKT…FIHNPSEDLA (77 aa)) form a necessary for RNA-binding region. 2 consecutive C3H1-type zinc fingers follow at residues 103–131 (RYKT…HGLG) and 141–169 (KYKT…HNPS). A necessary for interaction with PABPN1 region spans residues 103–194 (RYKTELCRTF…ISFSGLPSGR (92 aa)). Position 169 is a phosphoserine (Ser-169). The necessary for mRNA decay activation stretch occupies residues 174–326 (APGHPPVLRQ…PIFNRISVSE (153 aa)). Disordered regions lie at residues 175–245 (PGHP…RRDP) and 273–292 (SVQS…SSLG). Residue Ser-186 is modified to Phosphoserine; by MAPKAPK2. Residue Ser-197 is modified to Phosphoserine. Residues 198–202 (PPPPG) form a P-P-P-P-G repeat. A compositionally biased stretch (low complexity) spans 204-216 (AGPSLSSSSFSPS). Residue Ser-218 is modified to Phosphoserine. Residues 219–223 (PPPPG) form a P-P-P-P-G repeat. The residue at position 228 (Ser-228) is a Phosphoserine; by MAPK1; in vitro. A phosphoserine mark is found at Ser-276, Ser-296, and Ser-323. The tract at residues 312–326 (APRRLPIFNRISVSE) is interaction with CNOT1.

Associates with cytoplasmic CCR4-NOT and PAN2-PAN3 deadenylase complexes to trigger ARE-containing mRNA deadenylation and decay processes. Part of a mRNA decay activation complex at least composed of poly(A)-specific exoribonucleases CNOT6, EXOSC2 and XRN1 and mRNA-decapping enzymes DCP1A and DCP2. Associates with the RNA exosome complex. Interacts (via phosphorylated form) with 14-3-3 proteins; these interactions promote exclusion of ZFP36 from cytoplasmic stress granules in response to arsenite treatment in a MAPKAPK2-dependent manner and does not prevent CCR4-NOT deadenylase complex recruitment or ZFP36-induced ARE-containing mRNA deadenylation and decay processes. Interacts with 14-3-3 proteins; these interactions occur in response to rapamycin in an Akt-dependent manner. Interacts with AGO2 and AGO4. Interacts (via C-terminus) with CNOT1; this interaction occurs in a RNA-independent manner and induces mRNA deadenylation. Interacts (via N-terminus) with CNOT6. Interacts with CNOT6L. Interacts (via C-terminus) with CNOT7; this interaction occurs in a RNA-independent manner, induces mRNA deadenylation and is inhibited in a phosphorylation MAPKAPK2-dependent manner. Interacts (via unphosphorylated form) with CNOT8; this interaction occurs in a RNA-independent manner and is inhibited in a phosphorylation MAPKAPK2-dependent manner. Interacts with DCP1A. Interacts (via N-terminus) with DCP2. Interacts with EDC3. Interacts (via N-terminus) with EXOSC2. Interacts with heat shock 70 kDa proteins. Interacts with KHSRP; this interaction increases upon cytokine-induced treatment. Interacts with MAP3K4; this interaction enhances the association with SH3KBP1/CIN85. Interacts with MAPKAPK2; this interaction occurs upon skeletal muscle satellite cell activation. Interacts with NCL. Interacts with NUP214; this interaction increases upon lipopolysaccharide (LPS) stimulation. Interacts with PABPC1; this interaction occurs in a RNA-dependent manner. Interacts (via hypophosphorylated form) with PABPN1 (via RRM domain and C-terminal arginine-rich region); this interaction occurs in the nucleus in a RNA-independent manner, decreases in presence of single-stranded poly(A) RNA-oligomer and in a p38 MAPK-dependent-manner and inhibits nuclear poly(A) tail synthesis. Interacts with PAN2. Interacts (via C3H1-type zinc finger domains) with PKM. Interacts (via C3H1-type zinc finger domains) with nuclear RNA poly(A) polymerase. Interacts with PPP2CA; this interaction occurs in LPS-stimulated cells and induces ZFP36 dephosphorylation, and hence may promote ARE-containing mRNAs decay. Interacts (via C-terminus) with PRR5L (via C-terminus); this interaction may accelerate ZFP36-mediated mRNA decay during stress. Interacts (via C-terminus) with SFN; this interaction occurs in a phosphorylation-dependent manner. Interacts (via extreme C-terminal region) with SH3KBP1/CIN85 (via SH3 domains); this interaction enhances MAP3K4-induced phosphorylation of ZFP36 at Ser-66 and Ser-93 and does not alter neither ZFP36 binding to ARE-containing transcripts nor TNF-alpha mRNA decay. Interacts with XRN1. Interacts (via C-terminus and Ser-186 phosphorylated form) with YWHAB; this interaction occurs in a p38/MAPKAPK2-dependent manner, increases cytoplasmic localization of ZFP36 and protects ZFP36 from Ser-186 dephosphorylation by serine/threonine phosphatase 2A, and hence may be crucial for stabilizing ARE-containing mRNAs. Interacts (via phosphorylated form) with YWHAE. Interacts (via C-terminus) with YWHAG; this interaction occurs in a phosphorylation-dependent manner. Interacts with YWHAH; this interaction occurs in a phosphorylation-dependent manner. Interacts with YWHAQ; this interaction occurs in a phosphorylation-dependent manner. Interacts with (via C-terminus) YWHAZ; this interaction occurs in a phosphorylation-dependent manner. Interacts (via P-P-P-P-G repeats) with GIGYF2; the interaction is direct. In terms of assembly, (Microbial infection) Interacts (via C-terminus) with HTLV-1 TAX (via C-terminus); this interaction inhibits HTLV-1 TAX to transactivate viral long terminal repeat (LTR) promoter. Phosphorylated. Phosphorylation at serine and/or threonine residues occurs in a p38 MAPK- and MAPKAPK2-dependent manner. Phosphorylated by MAPKAPK2 at Ser-60 and Ser-186; phosphorylation increases its stability and cytoplasmic localization, promotes binding to 14-3-3 adapter proteins and inhibits the recruitment of cytoplasmic CCR4-NOT and PAN2-PAN3 deadenylase complexes to the mRNA decay machinery, thereby inhibiting ZFP36-induced ARE-containing mRNA deadenylation and decay processes. Phosphorylation by MAPKAPK2 does not impair ARE-containing RNA-binding. Phosphorylated in a MAPKAPK2- and p38 MAPK-dependent manner upon skeletal muscle satellite cell activation; this phosphorylation inhibits ZFP36-mediated mRNA decay activity, and hence stabilizes MYOD1 mRNA. Phosphorylated by MAPK1 upon mitogen stimulation. Phosphorylated at Ser-66 and Ser-93; these phosphorylations increase in a SH3KBP1-dependent manner. Phosphorylated at serine and threonine residues in a pyruvate kinase PKM- and p38 MAPK-dependent manner. Phosphorylation at Ser-60 may participate in the PKM-mediated degradation of ZFP36 in a p38 MAPK-dependent manner. Dephosphorylated by serine/threonine phosphatase 2A at Ser-186. Post-translationally, ubiquitinated; pyruvate kinase (PKM)-dependent ubiquitination leads to proteasomal degradation through a p38 MAPK signaling pathway. In terms of tissue distribution, expressed in both basal and suprabasal epidermal layers. Expressed in epidermal keratinocytes. Expressed strongly in mature dendritic cells. Expressed in immature dendritic cells (at protein level).

It is found in the nucleus. It localises to the cytoplasm. Its subcellular location is the cytoplasmic granule. The protein localises to the P-body. Zinc-finger RNA-binding protein that destabilizes several cytoplasmic AU-rich element (ARE)-containing mRNA transcripts by promoting their poly(A) tail removal or deadenylation, and hence provide a mechanism for attenuating protein synthesis. Acts as an 3'-untranslated region (UTR) ARE mRNA-binding adapter protein to communicate signaling events to the mRNA decay machinery. Recruits deadenylase CNOT7 (and probably the CCR4-NOT complex) via association with CNOT1, and hence promotes ARE-mediated mRNA deadenylation. Functions also by recruiting components of the cytoplasmic RNA decay machinery to the bound ARE-containing mRNAs. Self regulates by destabilizing its own mRNA. Binds to 3'-UTR ARE of numerous mRNAs and of its own mRNA. Plays a role in anti-inflammatory responses; suppresses tumor necrosis factor (TNF)-alpha production by stimulating ARE-mediated TNF-alpha mRNA decay and several other inflammatory ARE-containing mRNAs in interferon (IFN)- and/or lipopolysaccharide (LPS)-induced macrophages. Also plays a role in the regulation of dendritic cell maturation at the post-transcriptional level, and hence operates as part of a negative feedback loop to limit the inflammatory response. Promotes ARE-mediated mRNA decay of hypoxia-inducible factor HIF1A mRNA during the response of endothelial cells to hypoxia. Positively regulates early adipogenesis of preadipocytes by promoting ARE-mediated mRNA decay of immediate early genes (IEGs). Negatively regulates hematopoietic/erythroid cell differentiation by promoting ARE-mediated mRNA decay of the transcription factor STAT5B mRNA. Plays a role in maintaining skeletal muscle satellite cell quiescence by promoting ARE-mediated mRNA decay of the myogenic determination factor MYOD1 mRNA. Associates also with and regulates the expression of non-ARE-containing target mRNAs at the post-transcriptional level, such as MHC class I mRNAs. Participates in association with argonaute RISC catalytic components in the ARE-mediated mRNA decay mechanism; assists microRNA (miRNA) targeting ARE-containing mRNAs. May also play a role in the regulation of cytoplasmic mRNA decapping; enhances decapping of ARE-containing RNAs, in vitro. Involved in the delivery of target ARE-mRNAs to processing bodies (PBs). In addition to its cytosolic mRNA-decay function, affects nuclear pre-mRNA processing. Negatively regulates nuclear poly(A)-binding protein PABPN1-stimulated polyadenylation activity on ARE-containing pre-mRNA during LPS-stimulated macrophages. Also involved in the regulation of stress granule (SG) and P-body (PB) formation and fusion. Plays a role in the regulation of keratinocyte proliferation, differentiation and apoptosis. Plays a role as a tumor suppressor by inhibiting cell proliferation in breast cancer cells. In terms of biological role, (Microbial infection) Negatively regulates HTLV-1 TAX-dependent transactivation of viral long terminal repeat (LTR) promoter. This is mRNA decay activator protein ZFP36 from Homo sapiens (Human).